A 258-amino-acid chain; its full sequence is 4-hydroxy-tetrahydrodipicolinate reductase (258 aa).

NAD(+) contacts are provided by residues 9–14, 91–93, and 115–118; these read GASGRM, GTT, and SPNM. Histidine 148 serves as the catalytic Proton donor/acceptor. Histidine 149 lines the (S)-2,3,4,5-tetrahydrodipicolinate pocket. Catalysis depends on lysine 152, which acts as the Proton donor. (S)-2,3,4,5-tetrahydrodipicolinate is bound at residue 158-159; it reads GT.

The protein belongs to the DapB family.

It is found in the cytoplasm. It carries out the reaction (S)-2,3,4,5-tetrahydrodipicolinate + NAD(+) + H2O = (2S,4S)-4-hydroxy-2,3,4,5-tetrahydrodipicolinate + NADH + H(+). The catalysed reaction is (S)-2,3,4,5-tetrahydrodipicolinate + NADP(+) + H2O = (2S,4S)-4-hydroxy-2,3,4,5-tetrahydrodipicolinate + NADPH + H(+). It participates in amino-acid biosynthesis; L-lysine biosynthesis via DAP pathway; (S)-tetrahydrodipicolinate from L-aspartate: step 4/4. Catalyzes the conversion of 4-hydroxy-tetrahydrodipicolinate (HTPA) to tetrahydrodipicolinate. The chain is 4-hydroxy-tetrahydrodipicolinate reductase from Lawsonia intracellularis (strain PHE/MN1-00).